Reading from the N-terminus, the 281-residue chain is Elongation factor Ts (281 aa).

The interval 79–82 (TDFV) is involved in Mg(2+) ion dislocation from EF-Tu.

Belongs to the EF-Ts family.

Its subcellular location is the cytoplasm. Functionally, associates with the EF-Tu.GDP complex and induces the exchange of GDP to GTP. It remains bound to the aminoacyl-tRNA.EF-Tu.GTP complex up to the GTP hydrolysis stage on the ribosome. The chain is Elongation factor Ts from Wolbachia pipientis subsp. Culex pipiens (strain wPip).